Here is a 266-residue protein sequence, read N- to C-terminus: Glutamate racemase (266 aa).

Substrate-binding positions include 9-10 and 41-42; these read DS and YG. The active-site Proton donor/acceptor is C72. 73–74 lines the substrate pocket; it reads NT. The active-site Proton donor/acceptor is the C184. Position 185–186 (185–186) interacts with substrate; the sequence is TH.

The protein belongs to the aspartate/glutamate racemases family.

It carries out the reaction L-glutamate = D-glutamate. Its pathway is cell wall biogenesis; peptidoglycan biosynthesis. Its function is as follows. Provides the (R)-glutamate required for cell wall biosynthesis. In Staphylococcus aureus (strain bovine RF122 / ET3-1), this protein is Glutamate racemase.